The chain runs to 383 residues: tRNA-specific 2-thiouridylase MnmA (383 aa).

ATP contacts are provided by residues 30 to 37 (GMSGGVDS) and methionine 56. The segment at 116–118 (NPD) is interaction with target base in tRNA. Catalysis depends on cysteine 121, which acts as the Nucleophile. The cysteines at positions 121 and 218 are disulfide-linked. Glycine 146 serves as a coordination point for ATP. The interval 168–170 (KDQ) is interaction with tRNA. Residue cysteine 218 is the Cysteine persulfide intermediate of the active site. Residues 330 to 331 (RY) are interaction with tRNA.

This sequence belongs to the MnmA/TRMU family.

It is found in the cytoplasm. The catalysed reaction is S-sulfanyl-L-cysteinyl-[protein] + uridine(34) in tRNA + AH2 + ATP = 2-thiouridine(34) in tRNA + L-cysteinyl-[protein] + A + AMP + diphosphate + H(+). Its function is as follows. Catalyzes the 2-thiolation of uridine at the wobble position (U34) of tRNA, leading to the formation of s(2)U34. This is tRNA-specific 2-thiouridylase MnmA from Haemophilus influenzae (strain ATCC 51907 / DSM 11121 / KW20 / Rd).